The sequence spans 403 residues: S-adenosylmethionine synthase (403 aa).

An ATP-binding site is contributed by H17. D19 contacts Mg(2+). E45 provides a ligand contact to K(+). L-methionine is bound by residues E58 and Q104. The segment at 104–114 (QSPDIAQGVDT) is flexible loop. ATP contacts are provided by residues 179–181 (DGK), 250–251 (KF), D259, 265–266 (RK), A282, and K286. D259 is a binding site for L-methionine. Position 290 (K290) interacts with L-methionine.

It belongs to the AdoMet synthase family. As to quaternary structure, homotetramer; dimer of dimers. Mg(2+) is required as a cofactor. The cofactor is K(+).

It localises to the cytoplasm. The enzyme catalyses L-methionine + ATP + H2O = S-adenosyl-L-methionine + phosphate + diphosphate. The protein operates within amino-acid biosynthesis; S-adenosyl-L-methionine biosynthesis; S-adenosyl-L-methionine from L-methionine: step 1/1. Its function is as follows. Catalyzes the formation of S-adenosylmethionine (AdoMet) from methionine and ATP. The overall synthetic reaction is composed of two sequential steps, AdoMet formation and the subsequent tripolyphosphate hydrolysis which occurs prior to release of AdoMet from the enzyme. The sequence is that of S-adenosylmethionine synthase from Mycobacterium bovis (strain ATCC BAA-935 / AF2122/97).